An 875-amino-acid polypeptide reads, in one-letter code: Neurotrypsin (875 aa).

Positions 1 to 20 (MTLARFALALLFGVLPEVVG) are cleaved as a signal peptide. Residue asparagine 26 is glycosylated (N-linked (GlcNAc...) asparagine). Residues 51-72 (QRHRRTRPPPPLPRFPRPPRAL) form a disordered region. Over residues 58–71 (PPPPLPRFPRPPRA) the composition is skewed to pro residues. Residues 93–165 (CPAGEPWVSV…GKVDWGYCDC (73 aa)) form the Kringle domain. Cystine bridges form between cysteine 93/cysteine 165, cysteine 109/cysteine 149, cysteine 138/cysteine 163, cysteine 195/cysteine 259, cysteine 208/cysteine 269, cysteine 239/cysteine 249, cysteine 305/cysteine 369, cysteine 318/cysteine 379, cysteine 349/cysteine 359, cysteine 412/cysteine 475, cysteine 425/cysteine 485, cysteine 455/cysteine 465, cysteine 525/cysteine 589, cysteine 538/cysteine 599, cysteine 569/cysteine 579, cysteine 619/cysteine 750, cysteine 661/cysteine 677, cysteine 765/cysteine 831, cysteine 794/cysteine 808, and cysteine 821/cysteine 850. 4 consecutive SRCR domains span residues 170 to 271 (VRLR…MCSF), 280 to 381 (IRLV…SCTP), 387 to 487 (IRLA…ACYP), and 500 to 601 (VRLM…ICDY). The zymogen activation region stretch occupies residues 619-630 (CGLRLLHRRQKR). Residues 631–874 (IIGGKNSLRG…FVPWIKSVTK (244 aa)) form the Peptidase S1 domain. Residue histidine 676 is the Charge relay system of the active site. N-linked (GlcNAc...) asparagine glycosylation is present at asparagine 683. Aspartate 726 functions as the Charge relay system in the catalytic mechanism. Serine 825 serves as the catalytic Charge relay system.

The protein belongs to the peptidase S1 family.

It is found in the secreted. Its function is as follows. Plays a role in neuronal plasticity and the proteolytic action may subserve structural reorganizations associated with learning and memory operations. The chain is Neurotrypsin (PRSS12) from Saguinus labiatus (Red-chested mustached tamarin).